Reading from the N-terminus, the 352-residue chain is Protein RecA (352 aa).

Position 65–72 (65–72) interacts with ATP; that stretch reads GPESSGKT.

This sequence belongs to the RecA family.

The protein localises to the cytoplasm. Functionally, can catalyze the hydrolysis of ATP in the presence of single-stranded DNA, the ATP-dependent uptake of single-stranded DNA by duplex DNA, and the ATP-dependent hybridization of homologous single-stranded DNAs. It interacts with LexA causing its activation and leading to its autocatalytic cleavage. In Pseudomonas fluorescens (strain Pf0-1), this protein is Protein RecA.